Here is a 332-residue protein sequence, read N- to C-terminus: Cysteine and histidine-rich domain-containing protein 1 (332 aa).

Alanine 2 bears the N-acetylalanine mark. An interaction with PPP5C region spans residues alanine 2–valine 77. 6 residues coordinate Zn(2+): cysteine 5, cysteine 10, cysteine 24, histidine 27, cysteine 42, and cysteine 43. CHORD domains are found at residues cysteine 5 to histidine 64 and cysteine 157 to histidine 216. Position 47 is a phosphothreonine (threonine 47). At serine 51 the chain carries Phosphoserine. Residues cysteine 59, histidine 64, cysteine 157, cysteine 162, cysteine 176, histidine 179, cysteine 194, cysteine 195, cysteine 211, and histidine 216 each contribute to the Zn(2+) site. Residues asparagine 65–glutamate 316 form an interaction with HSP90AA1 and HSP90AB1 region. Residues valine 227–glutamate 316 form the CS domain.

In terms of assembly, interacts with HSP90AA1, ROCK1 and ROCK2. Interacts with HSP90AB1 and PPP5C. As to expression, underexpressed in many breast and lung cancers.

In terms of biological role, regulates centrosome duplication, probably by inhibiting the kinase activity of ROCK2. Proposed to act as co-chaperone for HSP90. May play a role in the regulation of NOD1 via a HSP90 chaperone complex. In vitro, has intrinsic chaperone activity. This function may be achieved by inhibiting association of ROCK2 with NPM1. Plays a role in ensuring the localization of the tyrosine kinase receptor EGFR to the plasma membrane, and thus ensures the subsequent regulation of EGFR activity and EGF-induced actin cytoskeleton remodeling. Involved in stress response. Prevents tumorigenesis. The protein is Cysteine and histidine-rich domain-containing protein 1 (CHORDC1) of Homo sapiens (Human).